The sequence spans 115 residues: UPF0295 protein BPUM_0828 (115 aa).

2 consecutive transmembrane segments (helical) span residues 13 to 33 (TFAL…VFFK) and 41 to 61 (FFML…FWIG).

It belongs to the UPF0295 family.

It localises to the cell membrane. In Bacillus pumilus (strain SAFR-032), this protein is UPF0295 protein BPUM_0828.